The chain runs to 404 residues: MKFIDEARIEVMAGDGGNGSASFRREKFIPRGGPDGGDGGRGGSIYALADRNLNTLVDYRFTRMHRAQRGENGGNKDCYGKGGEDIVLRMPVGTVITDLETGELVADLDEDGKQAIVARGGKGGLGNLHFKSSVNRAPRKRTMGEEGERRALRLELKVLADVGLLGMPNAGKSTFIRAVSAAKPKVADYPFTTLAPNLGVVRTDQNRSFVIADIPGLIEGAAEGHGLGHQFLRHLQRTRVLLHLVDLAPFDPDADPVRDAKAIVEELRKYDESLYNKPRWLALNKLDLIPEDERAARVAAFLEAYGPVERHFEISALTGDGCRKLVFAIQDFLDAGRAQAEAEKAARTHAEALAAAEAEARVEAAYQARLQALLAEGETGTGDDGRDGNENDPADEQDTNRPNH.

The Obg domain occupies 1–159 (MKFIDEARIE…RALRLELKVL (159 aa)). The disordered stretch occupies residues 22-43 (SFRREKFIPRGGPDGGDGGRGG). Residues 33–43 (GPDGGDGGRGG) are compositionally biased toward gly residues. The OBG-type G domain occupies 160–334 (ADVGLLGMPN…LVFAIQDFLD (175 aa)). Residues 166–173 (GMPNAGKS), 191–195 (FTTLA), 213–216 (DIPG), 284–287 (NKLD), and 315–317 (SAL) each bind GTP. Residues S173 and T193 each contribute to the Mg(2+) site. The disordered stretch occupies residues 373 to 404 (LLAEGETGTGDDGRDGNENDPADEQDTNRPNH).

It belongs to the TRAFAC class OBG-HflX-like GTPase superfamily. OBG GTPase family. As to quaternary structure, monomer. Mg(2+) serves as cofactor.

The protein localises to the cytoplasm. An essential GTPase which binds GTP, GDP and possibly (p)ppGpp with moderate affinity, with high nucleotide exchange rates and a fairly low GTP hydrolysis rate. Plays a role in control of the cell cycle, stress response, ribosome biogenesis and in those bacteria that undergo differentiation, in morphogenesis control. This chain is GTPase Obg, found in Aromatoleum aromaticum (strain DSM 19018 / LMG 30748 / EbN1) (Azoarcus sp. (strain EbN1)).